The sequence spans 234 residues: LexA repressor (234 aa).

The H-T-H motif DNA-binding region spans 26-46 (FDEMKTALELTSKSGIHRLIT). Active-site for autocatalytic cleavage activity residues include Ser155 and Lys193.

This sequence belongs to the peptidase S24 family. Homodimer.

The enzyme catalyses Hydrolysis of Ala-|-Gly bond in repressor LexA.. Its function is as follows. Represses a number of genes involved in the response to DNA damage (SOS response), including recA and lexA. In the presence of single-stranded DNA, RecA interacts with LexA causing an autocatalytic cleavage which disrupts the DNA-binding part of LexA, leading to derepression of the SOS regulon and eventually DNA repair. This chain is LexA repressor, found in Bartonella henselae (strain ATCC 49882 / DSM 28221 / CCUG 30454 / Houston 1) (Rochalimaea henselae).